A 359-amino-acid chain; its full sequence is RNA 3'-terminal phosphate cyclase (359 aa).

ATP is bound by residues Gln-100 and 291–294; that span reads HASD. Residue His-317 is the Tele-AMP-histidine intermediate of the active site.

It belongs to the RNA 3'-terminal cyclase family. Type 1 subfamily.

It localises to the cytoplasm. It carries out the reaction a 3'-end 3'-phospho-ribonucleotide-RNA + ATP = a 3'-end 2',3'-cyclophospho-ribonucleotide-RNA + AMP + diphosphate. In terms of biological role, catalyzes the conversion of 3'-phosphate to a 2',3'-cyclic phosphodiester at the end of RNA. The mechanism of action of the enzyme occurs in 3 steps: (A) adenylation of the enzyme by ATP; (B) transfer of adenylate to an RNA-N3'P to produce RNA-N3'PP5'A; (C) and attack of the adjacent 2'-hydroxyl on the 3'-phosphorus in the diester linkage to produce the cyclic end product. The biological role of this enzyme is unknown but it is likely to function in some aspects of cellular RNA processing. This Hyperthermus butylicus (strain DSM 5456 / JCM 9403 / PLM1-5) protein is RNA 3'-terminal phosphate cyclase.